A 1943-amino-acid chain; its full sequence is Sickle tail protein homolog (1943 aa).

Disordered stretches follow at residues 1-79 and 112-177; these read MEEN…KEIL and QERL…RSTN. A compositionally biased stretch (basic and acidic residues) spans 38 to 47; the sequence is AECRRTKERL. Over residues 48 to 62 the composition is skewed to polar residues; sequence SNGNSRGSVSKSSRN. Position 169 is a phosphoserine (serine 169). Tyrosine 244 is subject to Phosphotyrosine. The tract at residues 290-331 is disordered; that stretch reads ARGDGPGAPRPGSTAHPPHAIPNSPPSTPVPHSMPPSPSRIP. Residues 308–328 show a composition bias toward pro residues; it reads HAIPNSPPSTPVPHSMPPSPS. The O-linked (GlcNAc) serine glycan is linked to serine 357. 2 positions are modified to phosphoserine: serine 361 and serine 365. At tyrosine 393 the chain carries Phosphotyrosine. A disordered region spans residues 456-476; sequence RKYPDSHLPTLGSKTPPASPH. Threonine 470 is subject to Phosphothreonine. Phosphoserine is present on residues serine 474 and serine 526. Coiled-coil stretches lie at residues 557 to 581 and 644 to 685; these read RETR…QSAL and MSLL…ELEI. Serine 809 bears the Phosphoserine mark. The interval 848–874 is disordered; sequence VLKSQEEAAHTSGQPFHSTGAPGDAKS. Residues 957 to 985 adopt a coiled-coil conformation; sequence SAKNRAVSIEKAEKKWEEKRQNLDHYNGK. Disordered regions lie at residues 1003 to 1230, 1305 to 1329, and 1352 to 1377; these read PNLE…SDAS, KTKE…TESS, and PKEA…TEEN. Phosphoserine is present on residues serine 1027, serine 1030, serine 1033, and serine 1044. Positions 1044–1053 are enriched in pro residues; sequence SPPPPPPPPR. 3 stretches are compositionally biased toward basic and acidic residues: residues 1155–1167, 1174–1192, and 1305–1318; these read EPSR…KDTR, PKEK…KSDV, and KTKE…DKCH. Residues 1368-1377 show a composition bias toward polar residues; the sequence is SSSSSPTEEN. Serine 1461 carries the post-translational modification Phosphoserine. Residues 1464-1490 are a coiled coil; the sequence is FEECDEELERMMMEEKIEEEEEEENGD. Disordered stretches follow at residues 1481 to 1572, 1606 to 1660, and 1677 to 1943; these read EEEE…PKKK, EEEE…EIRK, and ENTI…KETS. Composition is skewed to polar residues over residues 1491–1501 and 1512–1533; these read SVVQNNNTSQM and RTGQ…TRNP. 2 stretches are compositionally biased toward basic and acidic residues: residues 1539 to 1548 and 1612 to 1625; these read NRTELNKFSH and GTLK…RFEI. Residues 1643 to 1653 show a composition bias toward polar residues; it reads QPSIESTSPIS. The stretch at 1656 to 1686 forms a coiled coil; it reads DEIRKNTYRTLDSLEQTIKQLENTISEMSPK. Composition is skewed to polar residues over residues 1691-1706 and 1731-1747; these read TSCS…SSHI and IPSA…QTSR. Serine 1739 carries the phosphoserine modification. Over residues 1763–1775 the composition is skewed to basic and acidic residues; the sequence is KPGKQSKLQDPRQ. Residues 1806–1825 show a composition bias toward low complexity; sequence SPSSGKSSSLPSSSGDSSNL. Composition is skewed to polar residues over residues 1834-1843 and 1853-1869; these read SIASNPLSPQ and LIPS…SLTH. Serine 1841 bears the Phosphoserine mark. Positions 1892-1905 are enriched in low complexity; it reads SFSSSPPSPASSVS. Phosphoserine occurs at positions 1896, 1899, and 1902. A compositionally biased stretch (polar residues) spans 1906 to 1943; it reads LNQGAKGTRTIHTPSLTSYKAQNGSSSKATPSTAKETS.

In terms of assembly, interacts with CPNE4 (via VWFA domain).

The protein resides in the cytoplasm. The protein localises to the cytoskeleton. It localises to the microtubule organizing center. Its subcellular location is the centrosome. Functionally, required for normal development of intervertebral disks. This chain is Sickle tail protein homolog (KIAA1217), found in Homo sapiens (Human).